A 190-amino-acid polypeptide reads, in one-letter code: MARLCAFLMVLAVMSYWPTCCLGCDLPQTHNLRNKRALTLLVKMRRLSPLSCLKDRKDFGFPQAKVDAQQIQEAQAIPVLSELTQQILNIFTSKDSSAAWNATLLDSVCNDLHQQLNDLQGCLMQEVGVQELSLTQEDSLLAVRKYFHRITVFLREKKHSPCAWEVVRAEIWRALSSSANLLARLSEKKE.

The first 23 residues, 1–23 (MARLCAFLMVLAVMSYWPTCCLG), serve as a signal peptide directing secretion. 2 cysteine pairs are disulfide-bonded: cysteine 24/cysteine 122 and cysteine 52/cysteine 162. N-linked (GlcNAc...) asparagine glycosylation is present at asparagine 101.

Belongs to the alpha/beta interferon family.

The protein localises to the secreted. Its function is as follows. Produced by macrophages, IFN-alpha have antiviral activities. Interferon stimulates the production of two enzymes: a protein kinase and an oligoadenylate synthetase. This chain is Interferon alpha-7 (Ifna7), found in Mus musculus (Mouse).